Reading from the N-terminus, the 166-residue chain is MSEPQPRGAERDLYRDTWVRYLGYANEVGEAFRSLVPAAVVWLSYGVASSYVLADAIDKGKKAGEVPSPEAGRSARVTVAVVDTFVWQALASVAIPGFTINRVCAASLYVLGTATRWPLAVRKWTTTALGLLTIPIIIHPIDRSVDFLLDSSLRKLYPTVGKPSSS.

The next 2 membrane-spanning stretches (helical) occupy residues 34-54 (SLVPAAVVWLSYGVASSYVLA) and 80-100 (AVVDTFVWQALASVAIPGFTI). An N6-succinyllysine modification is found at lysine 123. A helical transmembrane segment spans residues 129 to 149 (LGLLTIPIIIHPIDRSVDFLL).

The protein belongs to the MTFP1 family.

It is found in the mitochondrion inner membrane. Its function is as follows. Involved in the mitochondrial division probably by regulating membrane fission. Loss-of-function induces the release of cytochrome c, which activates the caspase cascade and leads to apoptosis. This is Mitochondrial fission process protein 1 (MTFP1) from Homo sapiens (Human).